Here is a 585-residue protein sequence, read N- to C-terminus: MAGUK p55 subfamily member 3 (585 aa).

L27 domains are found at residues 6-60 and 61-118; these read EDSG…ERQS and PTPV…FDPV. The region spanning 137-212 is the PDZ domain; that stretch reads IVRLVKNKEP…LAQSQGSITL (76 aa). Residues 226–296 enclose the SH3 domain; it reads ESKVFMRALF…PSKGFQERRL (71 aa). Ser307 is subject to Phosphoserine. The 186-residue stretch at 385–570 folds into the Guanylate kinase-like domain; it reads PRLVVLIGSL…AYSQLKVVLE (186 aa).

Belongs to the MAGUK family. Interacts with HTR2C; this interaction stabilizes the receptor at the plasma membrane and prevents the desensitization of the HTR2C receptor-mediated calcium response. Interacts with HTR2A. Interacts with HTR4. Interacts (via PDZ domain) with CADM1 (via C-terminus)Interacts (via PDZ domain) with CADM1; this interaction connects CADM1 with DLG1. Interacts (via Guanylate kinase-like domain) with PALS1. Interacts with DLG1 (via N-terminus); this interaction connects CADM1 with DLG1 and links CADM1 with the regulatory subunit of phosphoinositide-3-kinase (PI3K) by forming a multiprotein complex and participates in cell spreading. Expressed in retina (at protein level) at the subapical region (SAR) adjacent to adherens junctions at the OLM, and at the OPL.

Its subcellular location is the cell membrane. It localises to the apical cell membrane. The protein resides in the cell junction. It is found in the adherens junction. Its function is as follows. Participates in cell spreading through the phosphoinositide-3-kinase (PI3K) pathway by connecting CADM1 to DLG1 and the regulatory subunit of phosphoinositide-3-kinase (PI3K). Stabilizes HTR2C at the plasma membrane and prevents its desensitization. May participates in the maintenance of adherens junctions. The chain is MAGUK p55 subfamily member 3 from Homo sapiens (Human).